Consider the following 279-residue polypeptide: Putative pyruvate, phosphate dikinase regulatory protein (279 aa).

154–161 (GVSRTSKT) provides a ligand contact to ADP.

Belongs to the pyruvate, phosphate/water dikinase regulatory protein family. PDRP subfamily.

It catalyses the reaction N(tele)-phospho-L-histidyl/L-threonyl-[pyruvate, phosphate dikinase] + ADP = N(tele)-phospho-L-histidyl/O-phospho-L-threonyl-[pyruvate, phosphate dikinase] + AMP + H(+). It carries out the reaction N(tele)-phospho-L-histidyl/O-phospho-L-threonyl-[pyruvate, phosphate dikinase] + phosphate + H(+) = N(tele)-phospho-L-histidyl/L-threonyl-[pyruvate, phosphate dikinase] + diphosphate. Its function is as follows. Bifunctional serine/threonine kinase and phosphorylase involved in the regulation of the pyruvate, phosphate dikinase (PPDK) by catalyzing its phosphorylation/dephosphorylation. The protein is Putative pyruvate, phosphate dikinase regulatory protein of Rhodopseudomonas palustris (strain BisB18).